A 522-amino-acid chain; its full sequence is Golgin subfamily A member 6-like protein 10 (522 aa).

Residues 1–11 (MWPQPRLPPHP) are compositionally biased toward pro residues. The interval 1 to 77 (MWPQPRLPPH…DSATGIYGEG (77 aa)) is disordered. Over residues 51–62 (NGSSPDTATSGG) the composition is skewed to polar residues. Positions 157-328 (SKVEQLQDET…RLCEQEKLPG (172 aa)) form a coiled coil. The segment covering 439–452 (KELEKSGGAEEPRG) has biased composition (basic and acidic residues). The disordered stretch occupies residues 439–503 (KELEKSGGAE…TGEAAGGAEE (65 aa)). Low complexity-rich tracts occupy residues 456 to 471 (AAAA…PQGA) and 489 to 503 (GEAV…GAEE).

This sequence belongs to the GOLGA6 family.

The chain is Golgin subfamily A member 6-like protein 10 from Homo sapiens (Human).